A 92-amino-acid chain; its full sequence is Probable glutathione transferase (92 aa).

The 71-residue stretch at 1 to 71 (RTCPYAQRAR…YLEEAFPDPP (71 aa)) folds into the GST N-terminal domain. Residue C3 is the Nucleophile of the active site. Residues K30, V43, and 55–56 (ES) contribute to the glutathione site.

This sequence belongs to the GST superfamily. Omega family.

It catalyses the reaction RX + glutathione = an S-substituted glutathione + a halide anion + H(+). The catalysed reaction is L-dehydroascorbate + 2 glutathione = glutathione disulfide + L-ascorbate. It carries out the reaction methylarsonate + 2 glutathione + H(+) = methylarsonous acid + glutathione disulfide + H2O. In terms of biological role, exhibits glutathione-dependent thiol transferase activity. Has dehydroascorbate reductase activity and may contribute to the recycling of ascorbic acid. Participates in the biotransformation of inorganic arsenic and reduces monomethylarsonic acid (MMA). This chain is Probable glutathione transferase, found in Aplysia californica (California sea hare).